The primary structure comprises 210 residues: Thymidylate kinase (210 aa).

10–17 provides a ligand contact to ATP; the sequence is GPEGAGKS.

This sequence belongs to the thymidylate kinase family.

It carries out the reaction dTMP + ATP = dTDP + ADP. In terms of biological role, phosphorylation of dTMP to form dTDP in both de novo and salvage pathways of dTTP synthesis. This chain is Thymidylate kinase, found in Pseudomonas aeruginosa (strain UCBPP-PA14).